Consider the following 152-residue polypeptide: Glycine cleavage system H protein, mitochondrial (152 aa).

The transit peptide at 1–31 directs the protein to the mitochondrion; that stretch reads MALRMWASSTANALRLSSATRPHYSPLSRCF. The Lipoyl-binding domain occupies 53–135; that stretch reads VATVGITDHA…YEDGWMIKVK (83 aa). An N6-lipoyllysine modification is found at Lys-94.

It belongs to the GcvH family. As to quaternary structure, the glycine cleavage system is composed of four proteins: P, T, L and H. (R)-lipoate is required as a cofactor.

The protein resides in the mitochondrion. Its function is as follows. The glycine cleavage system catalyzes the degradation of glycine. The H protein shuttles the methylamine group of glycine from the P protein to the T protein. This chain is Glycine cleavage system H protein, mitochondrial (GDCSH), found in Flaveria pubescens (Yellowtops).